The following is a 143-amino-acid chain: 18.1 kDa class I heat shock protein (143 aa).

The region spanning 29–143 is the sHSP domain; that stretch reads ENSAFVSTRI…PEVKSIEISS (115 aa).

Belongs to the small heat shock protein (HSP20) family. In terms of assembly, forms oligomeric structures.

The protein resides in the cytoplasm. This Medicago sativa (Alfalfa) protein is 18.1 kDa class I heat shock protein (HSP18.1).